A 101-amino-acid chain; its full sequence is Small ribosomal subunit protein uS14 (101 aa).

It belongs to the universal ribosomal protein uS14 family. As to quaternary structure, part of the 30S ribosomal subunit. Contacts proteins S3 and S10.

Its function is as follows. Binds 16S rRNA, required for the assembly of 30S particles and may also be responsible for determining the conformation of the 16S rRNA at the A site. The sequence is that of Small ribosomal subunit protein uS14 from Francisella philomiragia subsp. philomiragia (strain ATCC 25017 / CCUG 19701 / FSC 153 / O#319-036).